The chain runs to 169 residues: MLTLPKYLRSELKKPLGQLYKSIDIIEEKLHQQLSEDKLIISIGDATTKNLIKLNIQPQICIVDNKIEREPVEHKLTHTDNLVHVNNPAGCITDELVKICIDSINTATSNNPVIIEVKGEEDLAVLPCILNAPKDTFILYGQPKEGVVLVCVNEAFNKAKHFYKQLNKE.

GTP-binding residues include D45, D64, K66, and E121.

It belongs to the GTP-dependent DPCK family.

It carries out the reaction 3'-dephospho-CoA + GTP = GDP + CoA + H(+). The protein operates within cofactor biosynthesis; coenzyme A biosynthesis. In terms of biological role, catalyzes the GTP-dependent phosphorylation of the 3'-hydroxyl group of dephosphocoenzyme A to form coenzyme A (CoA). The polypeptide is GTP-dependent dephospho-CoA kinase (Methanosphaera stadtmanae (strain ATCC 43021 / DSM 3091 / JCM 11832 / MCB-3)).